The sequence spans 332 residues: RNA polymerase principal sigma factor HrdD (332 aa).

Residues 1–11 (MATRAVARRKS) show a composition bias toward basic residues. The interval 1 to 25 (MATRAVARRKSAAGETSGSATSVRA) is disordered. Positions 13 to 22 (AGETSGSATS) are enriched in low complexity. A Polymerase core binding motif is present at residues 124 to 137 (DLIQEGNAGLVRAV). The segment at residues 294 to 313 (LTEVGKEHGLTRERIRQIEK) is a DNA-binding region (H-T-H motif).

The protein belongs to the sigma-70 factor family. Interacts transiently with the RNA polymerase catalytic core.

In terms of biological role, sigma factors are initiation factors that promote the attachment of RNA polymerase to specific initiation sites and are then released. The polypeptide is RNA polymerase principal sigma factor HrdD (hrdD) (Streptomyces coelicolor (strain ATCC BAA-471 / A3(2) / M145)).